A 207-amino-acid chain; its full sequence is Small ribosomal subunit protein uS4 (207 aa).

The disordered stretch occupies residues 31–55 (KCKLDSKPGQHGRTSGARTSDYGTQ). Residues 42–53 (GRTSGARTSDYG) are compositionally biased toward polar residues. An S4 RNA-binding domain is found at 97-157 (SRLDNVVYRM…EQKKKQARIL (61 aa)).

It belongs to the universal ribosomal protein uS4 family. In terms of assembly, part of the 30S ribosomal subunit. Contacts protein S5. The interaction surface between S4 and S5 is involved in control of translational fidelity.

In terms of biological role, one of the primary rRNA binding proteins, it binds directly to 16S rRNA where it nucleates assembly of the body of the 30S subunit. Its function is as follows. With S5 and S12 plays an important role in translational accuracy. The sequence is that of Small ribosomal subunit protein uS4 from Paraburkholderia xenovorans (strain LB400).